The following is a 512-amino-acid chain: Histidine ammonia-lyase (512 aa).

A cross-link (5-imidazolinone (Ala-Gly)) is located at residues 142 to 144 (ASG). 2,3-didehydroalanine (Ser) is present on serine 143.

Belongs to the PAL/histidase family. In terms of processing, contains an active site 4-methylidene-imidazol-5-one (MIO), which is formed autocatalytically by cyclization and dehydration of residues Ala-Ser-Gly.

The protein localises to the cytoplasm. The enzyme catalyses L-histidine = trans-urocanate + NH4(+). It functions in the pathway amino-acid degradation; L-histidine degradation into L-glutamate; N-formimidoyl-L-glutamate from L-histidine: step 1/3. This chain is Histidine ammonia-lyase, found in Allorhizobium ampelinum (strain ATCC BAA-846 / DSM 112012 / S4) (Agrobacterium vitis (strain S4)).